We begin with the raw amino-acid sequence, 97 residues long: Defensin-A2 (97 aa).

Positions 1–19 (MRTLSLLLALLFLAAQTLA) are cleaved as a signal peptide. Residues 20-61 (QPIDEGAEEVITEEPEITETQDPTTIMLIERGIGGDSTDATR) constitute a propeptide that is removed on maturation. 3 disulfide bridges follow: cysteine 66/cysteine 93, cysteine 68/cysteine 82, and cysteine 72/cysteine 92. Residues 96-97 (TS) constitute a propeptide that is removed on maturation.

It belongs to the alpha-defensin family. Highly expressed in intestine, expressed at lower levels in spleen, and at very low levels in kidney and lung.

The protein localises to the secreted. Functionally, has antimicrobial activity. This is Defensin-A2 from Ornithorhynchus anatinus (Duckbill platypus).